We begin with the raw amino-acid sequence, 214 residues long: Octanoyltransferase (214 aa).

Residues 35–211 (KSNIDFIWLG…IIQEEFYFNF (177 aa)) enclose the BPL/LPL catalytic domain. Substrate contacts are provided by residues 75 to 82 (RGGEVTCH), 142 to 144 (SIG), and 155 to 157 (GFS). Cys173 serves as the catalytic Acyl-thioester intermediate.

Belongs to the LipB family.

It is found in the cytoplasm. The catalysed reaction is octanoyl-[ACP] + L-lysyl-[protein] = N(6)-octanoyl-L-lysyl-[protein] + holo-[ACP] + H(+). Its pathway is protein modification; protein lipoylation via endogenous pathway; protein N(6)-(lipoyl)lysine from octanoyl-[acyl-carrier-protein]: step 1/2. Its function is as follows. Catalyzes the transfer of endogenously produced octanoic acid from octanoyl-acyl-carrier-protein onto the lipoyl domains of lipoate-dependent enzymes. Lipoyl-ACP can also act as a substrate although octanoyl-ACP is likely to be the physiological substrate. The protein is Octanoyltransferase of Prochlorococcus marinus (strain MIT 9515).